We begin with the raw amino-acid sequence, 256 residues long: 1-(5-phosphoribosyl)-5-[(5-phosphoribosylamino)methylideneamino] imidazole-4-carboxamide isomerase (256 aa).

The active-site Proton acceptor is the Asp-8. Residue Asp-130 is the Proton donor of the active site.

The protein belongs to the HisA/HisF family.

The protein localises to the cytoplasm. It catalyses the reaction 1-(5-phospho-beta-D-ribosyl)-5-[(5-phospho-beta-D-ribosylamino)methylideneamino]imidazole-4-carboxamide = 5-[(5-phospho-1-deoxy-D-ribulos-1-ylimino)methylamino]-1-(5-phospho-beta-D-ribosyl)imidazole-4-carboxamide. The protein operates within amino-acid biosynthesis; L-histidine biosynthesis; L-histidine from 5-phospho-alpha-D-ribose 1-diphosphate: step 4/9. The polypeptide is 1-(5-phosphoribosyl)-5-[(5-phosphoribosylamino)methylideneamino] imidazole-4-carboxamide isomerase (Chlorobium luteolum (strain DSM 273 / BCRC 81028 / 2530) (Pelodictyon luteolum)).